We begin with the raw amino-acid sequence, 619 residues long: Sodium-dependent dopamine transporter (619 aa).

Topologically, residues 1–56 (MSKSKCSVGPMSSVVAPAKEPNAVGPREVELILVKEQNGVQLTNSTLINPPQTPVE) are cytoplasmic. Residues 57–95 (VQERETWSKKIDFLLSVIGFAVDLANVWRFPYLCYKNGG) traverse the membrane as a discontinuously helical segment. Positions 75, 77, 78, 79, and 82 each coordinate Na(+). Residue Asp-79 coordinates dopamine. Helical transmembrane passes span 96 to 127 (GAFL…NREG) and 128 to 171 (AAGV…FSSF). Residues Ser-149 and Gly-153 each coordinate dopamine. Residues 172–235 (TMDLPWIHCN…SRGIDDLGPP (64 aa)) are Extracellular-facing. An intrachain disulfide couples Cys-180 to Cys-189. N-linked (GlcNAc...) asparagine glycosylation is found at Asn-181, Asn-188, Asn-196, and Asn-204. The next 2 membrane-spanning stretches (helical) occupy residues 236 to 255 (RWQL…FSLW) and 256 to 286 (KGVK…GVTL). Residues 287–305 (PGAMDGIRAYLSVDFYRLC) lie on the Extracellular side of the membrane. A discontinuously helical transmembrane segment spans residues 306–334 (EASVWIDAATQVCFSLGVGFGVLIAFSSY). A chloride-binding site is contributed by Gln-316. Phe-319 is a dopamine binding site. 2 residues coordinate Na(+): Ser-320 and Asn-352. Chloride is bound at residue Ser-320. A helical transmembrane segment spans residues 335-375 (NKFTNNCYRDAIITTSINSLTSFSSGFVVFSFLGYMAQKHN). Position 356 (Ser-356) interacts with chloride. Over 376-399 (VPIRDVATDGPGLIFIIYPEAIAT) the chain is Extracellular. Helical transmembrane passes span 400–441 (LPLS…QLLH), 442–465 (RHRE…CVTN), and 466–498 (GGIY…AWFY). Positions 417, 420, and 421 each coordinate Na(+). 2 residues coordinate dopamine: Ser-421 and Ala-422. The Cytoplasmic segment spans residues 499–515 (GVQQFSDDIKQMTGQRP). Residues 516–541 (NLYWRLCWKLVSPCFLLYVVVVSIVT) traverse the membrane as a helical segment. Residues 542 to 552 (FRPPHYGAYIF) are Extracellular-facing. Residues 553-582 (PDWANALGWIIATSSMAMVPIYATYKFCSL) form a helical membrane-spanning segment. Residues 560-589 (GWIIATSSMAMVPIYATYKFCSLPGSFREK) are interaction with TGFB1I1. The Cytoplasmic portion of the chain corresponds to 583–619 (PGSFREKLAYAITPEKDRQLVDRGEVRQFTLRHWLLV).

This sequence belongs to the sodium:neurotransmitter symporter (SNF) (TC 2.A.22) family. SLC6A3 subfamily. In terms of assembly, monomer. Homooligomer; disulfide-linked. Interacts with PRKCABP and TGFB1I1. Interacts (via N-terminus) with SYNGR3 (via N-terminus). Interacts with SLC18A2. Interacts with TOR1A (ATP-bound); TOR1A regulates SLC6A3 subcellular location. Interacts with alpha-synuclein/SNCA. Interacts with SEPTIN4. As to expression, found in the substantia nigra and ventral tegmental dopamine neurons, in fibers of the medial forebrain bundle ascending into the striatum, and within dense fiber networks and varicosities in the dorsal and ventral striatum (at protein level). Lower expression in the cortex (at protein level). Absent from the corpus callosum. Expressed throughout the retina at postnatal day 8.

It localises to the cell membrane. It is found in the cell projection. Its subcellular location is the neuron projection. The protein resides in the axon. It carries out the reaction dopamine(out) + chloride(out) + Na(+)(out) = dopamine(in) + chloride(in) + Na(+)(in). The enzyme catalyses (R)-noradrenaline(out) + chloride(out) + Na(+)(out) = (R)-noradrenaline(in) + chloride(in) + Na(+)(in). It catalyses the reaction dopamine(out) + chloride(out) + 2 Na(+)(out) = dopamine(in) + chloride(in) + 2 Na(+)(in). With respect to regulation, inhibited by amphetamine, bupropion, cocaine and ritalin. Inhibited by zinc ions. In terms of biological role, mediates sodium- and chloride-dependent transport of dopamine. Also mediates sodium- and chloride-dependent transport of norepinephrine (also known as noradrenaline). Regulator of light-dependent retinal hyaloid vessel regression, downstream of OPN5 signaling. The chain is Sodium-dependent dopamine transporter (Slc6a3) from Mus musculus (Mouse).